Reading from the N-terminus, the 283-residue chain is Fructose-1,6-bisphosphatase class 1 (283 aa).

Positions 67, 86, 88, and 89 each coordinate Mg(2+). Residues 89–92 (DGSS), Tyr-195, and Lys-225 each bind substrate. Glu-231 contacts Mg(2+).

This sequence belongs to the FBPase class 1 family. Homotetramer. Mg(2+) is required as a cofactor.

It localises to the cytoplasm. The catalysed reaction is beta-D-fructose 1,6-bisphosphate + H2O = beta-D-fructose 6-phosphate + phosphate. It participates in carbohydrate biosynthesis; gluconeogenesis. The protein is Fructose-1,6-bisphosphatase class 1 of Natronomonas pharaonis (strain ATCC 35678 / DSM 2160 / CIP 103997 / JCM 8858 / NBRC 14720 / NCIMB 2260 / Gabara) (Halobacterium pharaonis).